We begin with the raw amino-acid sequence, 492 residues long: Probable Xaa-Pro aminopeptidase AO090005001240 (492 aa).

Positions 272, 283, 420, and 459 each coordinate Mn(2+).

The protein belongs to the peptidase M24B family. Mn(2+) serves as cofactor.

The catalysed reaction is Release of any N-terminal amino acid, including proline, that is linked to proline, even from a dipeptide or tripeptide.. Its function is as follows. Catalyzes the removal of a penultimate prolyl residue from the N-termini of peptides. The sequence is that of Probable Xaa-Pro aminopeptidase AO090005001240 from Aspergillus oryzae (strain ATCC 42149 / RIB 40) (Yellow koji mold).